We begin with the raw amino-acid sequence, 370 residues long: Putative F-box protein At1g46984 (370 aa).

An F-box domain is found at 18–64 (YTQLSTLPIDLIIEILSRLPMNSIAICRLVSKQWASILQSSDFTESF).

This chain is Putative F-box protein At1g46984, found in Arabidopsis thaliana (Mouse-ear cress).